We begin with the raw amino-acid sequence, 302 residues long: Protein translocase subunit SecF (302 aa).

The next 6 membrane-spanning stretches (helical) occupy residues 12-32 (FFIY…FVKG), 138-158 (YAWY…TIRF), 166-186 (AILA…LFGI), 190-210 (LTAI…TIVV), 249-269 (FLVV…FAFG), and 272-292 (VGVI…VIGM).

It belongs to the SecD/SecF family. SecF subfamily. Forms a complex with SecD. Part of the essential Sec protein translocation apparatus which comprises SecA, SecYEG and auxiliary proteins SecDF. Other proteins may also be involved.

It localises to the cell inner membrane. In terms of biological role, part of the Sec protein translocase complex. Interacts with the SecYEG preprotein conducting channel. SecDF uses the proton motive force (PMF) to complete protein translocation after the ATP-dependent function of SecA. The protein is Protein translocase subunit SecF of Petrotoga mobilis (strain DSM 10674 / SJ95).